Reading from the N-terminus, the 333-residue chain is uncharacterized protein (333 aa).

Positions 1 to 23 (MSRSFMIILTIMLIALSLGEVLA) are cleaved as a signal peptide. The chain crosses the membrane as a helical span at residues 232–252 (SFFLGVLVTLMILSPVIVYLW).

It is found in the membrane. This is an uncharacterized protein from Pyrococcus abyssi (strain GE5 / Orsay).